Consider the following 520-residue polypeptide: MAEVKLGMKTQVPASVESQKPRSKKAPDFPIVEKQNWLIHLHYIRKDYEACKAVIKEQLQETQGLCEYAIYVQALIFRLEGNIQESLELFQTCAVLSPQCADNLKQVARSLFLLGKHKAATEVYNEAAKLNQKDWEICHNLGVCYTYLKQFNKAQDQLHSALQLNKHDLTYIMLGKIHLLQGDLDKAIEIYKKAVEFSPENTELLTTLGLLYLQLGVYQKAFEHLGNALTYDPANYKAILAAGSMMQTHGDFDVALTKYRVVACAIPESPPLWNNIGMCFFGKKKYVAAISCLKRANYLAPFDWKILYNLGLVHLTMQQYASAFHFLSAAINFQPKMGELYMLLAVALTNLEDIENARRAYVEAVRLDKCNPLVNLNYAVLLYNQGEKKSALAQYQEMEKKVNFLKDNSPLEFDSEMVEMAQKLGAALQVGEALVWTKPVKDPKTKHRTNSGSKSATLQQPLGSIQALGQAMSSAAAYRKILSGAVGAQLPKPPSLPLEPEPEPTVEASPTEASEQKKEK.

The disordered stretch occupies residues 1–26 (MAEVKLGMKTQVPASVESQKPRSKKA). A required for localization to centrosomes region spans residues 1-66 (MAEVKLGMKT…EQLQETQGLC (66 aa)). 10 TPR repeats span residues 67–100 (EYAIYVQALIFRLEGNIQESLELFQTCAVLSPQC), 102–134 (DNLKQVARSLFLLGKHKAATEVYNEAAKLNQKD), 135–167 (WEICHNLGVCYTYLKQFNKAQDQLHSALQLNKH), 168–201 (DLTYIMLGKIHLLQGDLDKAIEIYKKAVEFSPEN), 203–235 (ELLTTLGLLYLQLGVYQKAFEHLGNALTYDPAN), 237–269 (KAILAAGSMMQTHGDFDVALTKYRVVACAIPES), 270–303 (PPLWNNIGMCFFGKKKYVAAISCLKRANYLAPFD), 304–337 (WKILYNLGLVHLTMQQYASAFHFLSAAINFQPKM), 339–371 (ELYMLLAVALTNLEDIENARRAYVEAVRLDKCN), and 373–408 (LVNLNYAVLLYNQGEKKSALAQYQEMEKKVNFLKDN). The tract at residues 101 to 337 (ADNLKQVARS…SAAINFQPKM (237 aa)) is interaction with PCM1. Positions 338–520 (GELYMLLAVA…TEASEQKKEK (183 aa)) are required for localization to centrosomes. The disordered stretch occupies residues 488-520 (AQLPKPPSLPLEPEPEPTVEASPTEASEQKKEK).

This sequence belongs to the BBS4 family. Part of BBSome complex, that contains BBS1, BBS2, BBS4, BBS5, BBS7, BBS8/TTC8, BBS9 and BBIP10. Interacts with PCM1 and DCTN1. Interacts with DC28B. Interacts with ALDOB and C2CD3. Interacts with PKD1. Interacts with CEP290. Interacts with DLEC1. As to expression, expressed in the hippocampus and dentate gyrus, the columnar epithelial cells of bronchioles, the olfactory epithelium and the inner segment and outer nuclear layer of the retina. Expressed in testis.

It localises to the cytoplasm. It is found in the cytoskeleton. Its subcellular location is the microtubule organizing center. The protein localises to the centrosome. The protein resides in the cell projection. It localises to the cilium membrane. It is found in the centriolar satellite. Its subcellular location is the cilium. The protein localises to the flagellum. Functionally, the BBSome complex is thought to function as a coat complex required for sorting of specific membrane proteins to the primary cilia. The BBSome complex is required for ciliogenesis but is dispensable for centriolar satellite function. This ciliogenic function is mediated in part by the Rab8 GDP/GTP exchange factor, which localizes to the basal body and contacts the BBSome. Rab8(GTP) enters the primary cilium and promotes extension of the ciliary membrane. Firstly the BBSome associates with the ciliary membrane and binds to RAB3IP/Rabin8, the guanosyl exchange factor (GEF) for Rab8 and then the Rab8-GTP localizes to the cilium and promotes docking and fusion of carrier vesicles to the base of the ciliary membrane. The BBSome complex, together with the LTZL1, controls SMO ciliary trafficking and contributes to the sonic hedgehog (SHH) pathway regulation. Required for proper BBSome complex assembly and its ciliary localization. Required for microtubule anchoring at the centrosome but not for microtubule nucleation. May be required for the dynein-mediated transport of pericentriolar proteins to the centrosome. The sequence is that of BBSome complex member BBS4 (Bbs4) from Mus musculus (Mouse).